Consider the following 431-residue polypeptide: Argininosuccinate lyase (431 aa).

This sequence belongs to the lyase 1 family. Argininosuccinate lyase subfamily.

It is found in the cytoplasm. The enzyme catalyses 2-(N(omega)-L-arginino)succinate = fumarate + L-arginine. Its pathway is amino-acid biosynthesis; L-arginine biosynthesis; L-arginine from L-ornithine and carbamoyl phosphate: step 3/3. The protein is Argininosuccinate lyase of Stenotrophomonas maltophilia (strain K279a).